The chain runs to 101 residues: Gamma-secretase subunit PEN-2 (101 aa).

The Cytoplasmic portion of the chain corresponds to 1-17; that stretch reads MNLERVSNEEKLNLCRK. An intramembrane region (helical) is located at residues 18–36; the sequence is YYLGGFAFLPFLWLVNIFW. Residues 37-57 lie on the Cytoplasmic side of the membrane; the sequence is FFREAFLVPAYTEQSQIKGYV. A helical transmembrane segment spans residues 58–78; the sequence is WRSAVGFLFWVIVLTSWITIF. The Lumenal segment spans residues 79 to 101; the sequence is QIYRPRWGALGDYLSFTIPLGTP.

This sequence belongs to the PEN-2 family. As to quaternary structure, the functional gamma-secretase complex is composed of at least four polypeptides: a presenilin homodimer (PSEN1 or PSEN2), nicastrin (NCSTN), APH1 (APH1A or APH1B) and PSENEN. In terms of tissue distribution, widely expressed. Expressed in leukocytes, lung, placenta, small intestine, liver, kidney, spleen thymus, skeletal muscle, heart and brain.

It localises to the endoplasmic reticulum membrane. The protein resides in the golgi apparatus. The protein localises to the golgi stack membrane. Its subcellular location is the cell membrane. It is found in the membrane. In terms of biological role, essential subunit of the gamma-secretase complex, an endoprotease complex that catalyzes the intramembrane cleavage of integral membrane proteins such as Notch receptors and APP (amyloid-beta precursor protein). The gamma-secretase complex plays a role in Notch and Wnt signaling cascades and regulation of downstream processes via its role in processing key regulatory proteins, and by regulating cytosolic CTNNB1 levels. PSENEN modulates both endoproteolysis of presenilin and gamma-secretase activity. The protein is Gamma-secretase subunit PEN-2 (PSENEN) of Homo sapiens (Human).